A 219-amino-acid chain; its full sequence is ATP synthase delta chain, chloroplastic (219 aa).

The transit peptide at 1–33 (MLAAKSIAGPRAFKASAVRAAPKAGRRTVVVMA) directs the protein to the chloroplast.

This sequence belongs to the ATPase delta chain family. F-type ATPases have 2 components, F(1) - the catalytic core - and F(0) - the membrane proton channel. F(1) has five subunits: alpha(3), beta(3), gamma(1), delta(1), epsilon(1). F(0) has four main subunits: a(1), b(1), b'(1) and c(10-14). The alpha and beta chains form an alternating ring which encloses part of the gamma chain. F(1) is attached to F(0) by a central stalk formed by the gamma and epsilon chains, while a peripheral stalk is formed by the delta, b and b' chains.

It localises to the plastid. The protein resides in the chloroplast thylakoid membrane. F(1)F(0) ATP synthase produces ATP from ADP in the presence of a proton or sodium gradient. F-type ATPases consist of two structural domains, F(1) containing the extramembraneous catalytic core and F(0) containing the membrane proton channel, linked together by a central stalk and a peripheral stalk. During catalysis, ATP synthesis in the catalytic domain of F(1) is coupled via a rotary mechanism of the central stalk subunits to proton translocation. Its function is as follows. This protein seems to be part of the stalk that links CF(0) to CF(1). It either transmits conformational changes from CF(0) into CF(1) or is implicated in proton conduction. In Chlamydomonas reinhardtii (Chlamydomonas smithii), this protein is ATP synthase delta chain, chloroplastic.